A 388-amino-acid polypeptide reads, in one-letter code: Alanine racemase 3 (388 aa).

The Proton acceptor; specific for D-alanine role is filled by lysine 41. Position 41 is an N6-(pyridoxal phosphate)lysine (lysine 41). Arginine 135 is a substrate binding site. Residue tyrosine 256 is the Proton acceptor; specific for L-alanine of the active site. Methionine 304 provides a ligand contact to substrate.

It belongs to the alanine racemase family. Requires pyridoxal 5'-phosphate as cofactor.

It catalyses the reaction L-alanine = D-alanine. Its pathway is amino-acid biosynthesis; D-alanine biosynthesis; D-alanine from L-alanine: step 1/1. In terms of biological role, catalyzes the interconversion of L-alanine and D-alanine. May also act on other amino acids. The protein is Alanine racemase 3 (alr3) of Mesorhizobium japonicum (strain LMG 29417 / CECT 9101 / MAFF 303099) (Mesorhizobium loti (strain MAFF 303099)).